The sequence spans 261 residues: 4-phosphopantoate--beta-alanine ligase (261 aa).

ATP contacts are provided by residues arginine 17, arginine 39, 181 to 183 (DLN), 187 to 188 (RS), and 199 to 200 (NI).

The protein belongs to the archaeal phosphopantothenate synthetase family. Homodimer.

It catalyses the reaction (R)-4-phosphopantoate + beta-alanine + ATP = (R)-4'-phosphopantothenate + AMP + diphosphate + H(+). It functions in the pathway cofactor biosynthesis; coenzyme A biosynthesis. With respect to regulation, activity is not affected by 4'-phosphopantothenate or CoA/acetyl-CoA. In terms of biological role, catalyzes the condensation of (R)-4-phosphopantoate and beta-alanine to 4'-phosphopantothenate in the CoA biosynthesis pathway. Cannot use (R)-pantoate as substrate and thus does not display pantothenate synthetase (PS) activity. Displays strict specificity for its natural substrates, 4-phosphopantoate, ATP and beta-alanine. This chain is 4-phosphopantoate--beta-alanine ligase, found in Thermococcus kodakarensis (strain ATCC BAA-918 / JCM 12380 / KOD1) (Pyrococcus kodakaraensis (strain KOD1)).